The sequence spans 238 residues: uncharacterized protein (238 aa).

The helical transmembrane segment at 10 to 33 (TLLALMISLSLSSLLLLSISHFYV) threads the bilayer.

It localises to the membrane. This is an uncharacterized protein from Haemophilus influenzae (strain ATCC 51907 / DSM 11121 / KW20 / Rd).